Reading from the N-terminus, the 277-residue chain is Thymidylate synthase (277 aa).

A dUMP-binding site is contributed by Arg21. His51 lines the (6R)-5,10-methylene-5,6,7,8-tetrahydrofolate pocket. 126–127 (RR) lines the dUMP pocket. The Nucleophile role is filled by Cys159. DUMP is bound by residues 179-182 (RSSD), Asn190, and 220-222 (HAY). Asp182 lines the (6R)-5,10-methylene-5,6,7,8-tetrahydrofolate pocket. Residue Ala276 coordinates (6R)-5,10-methylene-5,6,7,8-tetrahydrofolate.

Belongs to the thymidylate synthase family. Bacterial-type ThyA subfamily. Homodimer.

The protein localises to the cytoplasm. It carries out the reaction dUMP + (6R)-5,10-methylene-5,6,7,8-tetrahydrofolate = 7,8-dihydrofolate + dTMP. It participates in pyrimidine metabolism; dTTP biosynthesis. Functionally, catalyzes the reductive methylation of 2'-deoxyuridine-5'-monophosphate (dUMP) to 2'-deoxythymidine-5'-monophosphate (dTMP) while utilizing 5,10-methylenetetrahydrofolate (mTHF) as the methyl donor and reductant in the reaction, yielding dihydrofolate (DHF) as a by-product. This enzymatic reaction provides an intracellular de novo source of dTMP, an essential precursor for DNA biosynthesis. The sequence is that of Thymidylate synthase from Pseudomonas fluorescens (strain SBW25).